The following is a 379-amino-acid chain: Cytochrome b (379 aa).

The next 4 helical transmembrane spans lie at 33–53 (FGSL…FLAM), 77–98 (WLIR…FIHV), 113–133 (WNIG…GYVL), and 178–198 (FFAF…VHLL). His83 and His97 together coordinate heme b. Positions 182 and 196 each coordinate heme b. Residue His201 participates in a ubiquinone binding. A run of 4 helical transmembrane segments spans residues 226–246 (IKDL…ALFF), 288–308 (LGGV…PLLN), 320–340 (VTQT…WIGG), and 347–367 (FTMI…VLMP).

It belongs to the cytochrome b family. As to quaternary structure, the cytochrome bc1 complex contains 11 subunits: 3 respiratory subunits (MT-CYB, CYC1 and UQCRFS1), 2 core proteins (UQCRC1 and UQCRC2) and 6 low-molecular weight proteins (UQCRH/QCR6, UQCRB/QCR7, UQCRQ/QCR8, UQCR10/QCR9, UQCR11/QCR10 and a cleavage product of UQCRFS1). This cytochrome bc1 complex then forms a dimer. Heme b is required as a cofactor.

Its subcellular location is the mitochondrion inner membrane. In terms of biological role, component of the ubiquinol-cytochrome c reductase complex (complex III or cytochrome b-c1 complex) that is part of the mitochondrial respiratory chain. The b-c1 complex mediates electron transfer from ubiquinol to cytochrome c. Contributes to the generation of a proton gradient across the mitochondrial membrane that is then used for ATP synthesis. The protein is Cytochrome b (MT-CYB) of Akodon iniscatus (Intelligent grass mouse).